Consider the following 54-residue polypeptide: Ovomucoid (54 aa).

One can recognise a Kazal-like domain in the interval 4–54; the sequence is VDCSDYPKPACSLDYMPLCGSDSKTYSNKCNFCNAVVDSNGTLTLSHFEKC. Intrachain disulfides connect Cys-6–Cys-36, Cys-14–Cys-33, and Cys-22–Cys-54. N-linked (GlcNAc...) asparagine glycosylation occurs at Asn-43.

Its subcellular location is the secreted. The protein is Ovomucoid of Chroicocephalus ridibundus (Black-headed gull).